The following is a 99-amino-acid chain: Large ribosomal subunit protein eL42 (99 aa).

This sequence belongs to the eukaryotic ribosomal protein eL42 family.

In Chlamydomonas reinhardtii (Chlamydomonas smithii), this protein is Large ribosomal subunit protein eL42 (RPL44).